The chain runs to 264 residues: MKILQQDDFGYWLLTQGSNLYLVNNELPFGIAKDIDLEGLQAMQIGEWKNHPLWLVAEQESDEREYVSLRNLLSLPEDEFHILSRGVEINHFLKTHKFCGKCGHKTQQTQDELAVQCIHCGYQTYPVICPSIIVAVRRGHEILLANHKRHYSPNGGIYTTLAGFVEVGETFEQAVQREVFEETGISIKNLRYFGSQPWAFPNSQMVGFLADYESGEITLQESEIHDAQWFSYDQPLPELPPTGTIARKLIHVTLELCKAEHKCD.

Residue Arg70 coordinates substrate. Zn(2+)-binding residues include Cys99 and Cys102. Position 112 (Glu112) interacts with substrate. Zn(2+) is bound by residues Cys117 and Cys120. Tyr125 is a binding site for substrate. The Nudix hydrolase domain maps to 126–253 (PVICPSIIVA…TIARKLIHVT (128 aa)). The a divalent metal cation site is built by Ala162, Glu178, and Glu182. A Nudix box motif is present at residues 163–184 (GFVEVGETFEQAVQREVFEETG). 196–203 (QPWAFPNS) contributes to the substrate binding site. Glu223 provides a ligand contact to a divalent metal cation. Ala246 lines the substrate pocket.

It belongs to the Nudix hydrolase family. NudC subfamily. Homodimer. Mg(2+) is required as a cofactor. It depends on Mn(2+) as a cofactor. Zn(2+) serves as cofactor.

The catalysed reaction is a 5'-end NAD(+)-phospho-ribonucleoside in mRNA + H2O = a 5'-end phospho-adenosine-phospho-ribonucleoside in mRNA + beta-nicotinamide D-ribonucleotide + 2 H(+). The enzyme catalyses NAD(+) + H2O = beta-nicotinamide D-ribonucleotide + AMP + 2 H(+). It catalyses the reaction NADH + H2O = reduced beta-nicotinamide D-ribonucleotide + AMP + 2 H(+). In terms of biological role, mRNA decapping enzyme that specifically removes the nicotinamide adenine dinucleotide (NAD) cap from a subset of mRNAs by hydrolyzing the diphosphate linkage to produce nicotinamide mononucleotide (NMN) and 5' monophosphate mRNA. The NAD-cap is present at the 5'-end of some mRNAs and stabilizes RNA against 5'-processing. Has preference for mRNAs with a 5'-end purine. Catalyzes the hydrolysis of a broad range of dinucleotide pyrophosphates. In Haemophilus influenzae (strain 86-028NP), this protein is NAD-capped RNA hydrolase NudC.